Here is a 359-residue protein sequence, read N- to C-terminus: Alanine racemase, biosynthetic (359 aa).

Lys34 acts as the Proton acceptor; specific for D-alanine in catalysis. Lys34 carries the post-translational modification N6-(pyridoxal phosphate)lysine. An N6-carboxylysine modification is found at Lys122. Arg129 serves as a coordination point for substrate. The active-site Proton acceptor; specific for L-alanine is the Tyr255. Substrate is bound at residue Met303.

This sequence belongs to the alanine racemase family. In terms of assembly, homodimer. Pyridoxal 5'-phosphate is required as a cofactor.

The catalysed reaction is L-alanine = D-alanine. It functions in the pathway amino-acid biosynthesis; D-alanine biosynthesis; D-alanine from L-alanine: step 1/1. The protein operates within cell wall biogenesis; peptidoglycan biosynthesis. Functionally, catalyzes the interconversion of L-alanine and D-alanine. Provides the D-alanine required for cell wall biosynthesis. The protein is Alanine racemase, biosynthetic of Escherichia coli (strain K12).